A 134-amino-acid chain; its full sequence is Proline-rich protein 4 (134 aa).

The signal sequence occupies residues 1-16 (MLLVLLSVVLLALSSA). The segment at 28-134 (FTFTIPDVED…ARHPQEQPLW (107 aa)) is disordered. The span at 47-59 (QRPPPEGLLPRPP) shows a compositional bias: pro residues. Residues 110 to 119 (VSLQEASSFF) are compositionally biased toward polar residues. Positions 120-134 (QRDRPARHPQEQPLW) are enriched in basic and acidic residues.

As to expression, abundantly expressed in lacrimal gland where it is found in the acinar cells but not in the intralobular ducts. Also found in the submandibular gland, the parotid and sublingual glands.

Its subcellular location is the secreted. In Homo sapiens (Human), this protein is Proline-rich protein 4 (PRR4).